Consider the following 35-residue polypeptide: uncharacterized protein (35 aa).

Residues 10–30 (LMITASFFAIFIIIVVSVLLL) traverse the membrane as a helical segment.

The protein localises to the membrane. This is an uncharacterized protein from Salmonella paratyphi A (strain ATCC 9150 / SARB42).